The following is a 368-amino-acid chain: S-adenosylmethionine decarboxylase proenzyme (368 aa).

Catalysis depends on residues E26 and E29. S83 acts as the Schiff-base intermediate with substrate; via pyruvic acid in catalysis. Pyruvic acid (Ser); by autocatalysis is present on S83. The active-site Proton donor; for catalytic activity is the C97. Residues S246 and H261 each act as proton acceptor; for processing activity in the active site.

This sequence belongs to the eukaryotic AdoMetDC family. In terms of assembly, heterotetramer of two alpha and two beta chains. It depends on pyruvate as a cofactor. Is synthesized initially as an inactive proenzyme. Formation of the active enzyme involves a self-maturation process in which the active site pyruvoyl group is generated from an internal serine residue via an autocatalytic post-translational modification. Two non-identical subunits are generated from the proenzyme in this reaction, and the pyruvate is formed at the N-terminus of the alpha chain, which is derived from the carboxyl end of the proenzyme. The post-translation cleavage follows an unusual pathway, termed non-hydrolytic serinolysis, in which the side chain hydroxyl group of the serine supplies its oxygen atom to form the C-terminus of the beta chain, while the remainder of the serine residue undergoes an oxidative deamination to produce ammonia and the pyruvoyl group blocking the N-terminus of the alpha chain.

It catalyses the reaction S-adenosyl-L-methionine + H(+) = S-adenosyl 3-(methylsulfanyl)propylamine + CO2. It participates in amine and polyamine biosynthesis; S-adenosylmethioninamine biosynthesis; S-adenosylmethioninamine from S-adenosyl-L-methionine: step 1/1. Functionally, essential for biosynthesis of the polyamines spermidine and spermine. Polyamines are essential for cell proliferation and are implicated in cellular processes, ranging from DNA replication to apoptosis. The chain is S-adenosylmethionine decarboxylase proenzyme from Caenorhabditis elegans.